Consider the following 400-residue polypeptide: Tryptophan synthase beta chain (400 aa).

N6-(pyridoxal phosphate)lysine is present on Lys92.

It belongs to the TrpB family. Tetramer of two alpha and two beta chains. It depends on pyridoxal 5'-phosphate as a cofactor.

The enzyme catalyses (1S,2R)-1-C-(indol-3-yl)glycerol 3-phosphate + L-serine = D-glyceraldehyde 3-phosphate + L-tryptophan + H2O. Its pathway is amino-acid biosynthesis; L-tryptophan biosynthesis; L-tryptophan from chorismate: step 5/5. The beta subunit is responsible for the synthesis of L-tryptophan from indole and L-serine. The protein is Tryptophan synthase beta chain of Neisseria meningitidis serogroup B (strain ATCC BAA-335 / MC58).